The primary structure comprises 459 residues: Argininosuccinate lyase (459 aa).

It belongs to the lyase 1 family. Argininosuccinate lyase subfamily.

The protein resides in the cytoplasm. It carries out the reaction 2-(N(omega)-L-arginino)succinate = fumarate + L-arginine. It functions in the pathway amino-acid biosynthesis; L-arginine biosynthesis; L-arginine from L-ornithine and carbamoyl phosphate: step 3/3. The sequence is that of Argininosuccinate lyase from Staphylococcus aureus (strain USA300).